We begin with the raw amino-acid sequence, 613 residues long: Pesticidal crystal-like protein Cry16Aa (613 aa).

Belongs to the delta endotoxin family.

The protein localises to the secreted. In terms of biological role, toxin active on mosquito larvae of the species Aedes aegypti, Culex pipiens and Anopheles stephensi. The chain is Pesticidal crystal-like protein Cry16Aa (cry16Aa) from Paraclostridium bifermentans (Clostridium bifermentans).